The primary structure comprises 455 residues: Ribulose bisphosphate carboxylase large chain (455 aa).

At Lys5 the chain carries N6,N6,N6-trimethyllysine. Substrate is bound by residues Asn114 and Thr164. Lys166 functions as the Proton acceptor in the catalytic mechanism. Lys168 provides a ligand contact to substrate. Mg(2+)-binding residues include Lys192, Asp194, and Glu195. Lys192 is subject to N6-carboxylysine. His285 serves as the catalytic Proton acceptor. Residues Arg286, His318, and Ser370 each coordinate substrate.

This sequence belongs to the RuBisCO large chain family. Type I subfamily. In terms of assembly, heterohexadecamer of 8 large chains and 8 small chains; disulfide-linked. The disulfide link is formed within the large subunit homodimers. Mg(2+) is required as a cofactor. In terms of processing, the disulfide bond which can form in the large chain dimeric partners within the hexadecamer appears to be associated with oxidative stress and protein turnover.

Its subcellular location is the plastid. The protein localises to the chloroplast. The enzyme catalyses 2 (2R)-3-phosphoglycerate + 2 H(+) = D-ribulose 1,5-bisphosphate + CO2 + H2O. It carries out the reaction D-ribulose 1,5-bisphosphate + O2 = 2-phosphoglycolate + (2R)-3-phosphoglycerate + 2 H(+). In terms of biological role, ruBisCO catalyzes two reactions: the carboxylation of D-ribulose 1,5-bisphosphate, the primary event in carbon dioxide fixation, as well as the oxidative fragmentation of the pentose substrate in the photorespiration process. Both reactions occur simultaneously and in competition at the same active site. The protein is Ribulose bisphosphate carboxylase large chain of Erythrina crista-galli (Cockspur coral tree).